We begin with the raw amino-acid sequence, 469 residues long: 3-isopropylmalate dehydratase large subunit (469 aa).

[4Fe-4S] cluster is bound by residues Cys-349, Cys-409, and Cys-412.

The protein belongs to the aconitase/IPM isomerase family. LeuC type 1 subfamily. Heterodimer of LeuC and LeuD. [4Fe-4S] cluster serves as cofactor.

The catalysed reaction is (2R,3S)-3-isopropylmalate = (2S)-2-isopropylmalate. It functions in the pathway amino-acid biosynthesis; L-leucine biosynthesis; L-leucine from 3-methyl-2-oxobutanoate: step 2/4. Its function is as follows. Catalyzes the isomerization between 2-isopropylmalate and 3-isopropylmalate, via the formation of 2-isopropylmaleate. The chain is 3-isopropylmalate dehydratase large subunit from Methylorubrum populi (strain ATCC BAA-705 / NCIMB 13946 / BJ001) (Methylobacterium populi).